We begin with the raw amino-acid sequence, 1742 residues long: Kinase non-catalytic C-lobe domain-containing protein 1 (1742 aa).

A KIND 1 domain is found at 37–217; the sequence is VSLADILSLR…QELSENTWRG (181 aa). 2 disordered regions span residues 215-288 and 365-455; these read WRGR…EGLA and FKTQ…TEQS. Position 267 is a phosphoserine (Ser267). The segment covering 403-412 has biased composition (polar residues); it reads LEASSPSQGS. Positions 426–445 are enriched in basic and acidic residues; that stretch reads DSDHEGHIPRSEEKIPEESR. The 165-residue stretch at 456 to 620 folds into the KIND 2 domain; it reads LSLKDLLSKL…RASTCKVHPE (165 aa). Disordered stretches follow at residues 703-727, 744-876, 948-1006, and 1028-1076; these read DQLA…REGT, SNQL…KMTA, GPAS…LSDI, and VTRE…ASDF. A compositionally biased stretch (basic and acidic residues) spans 711 to 727; it reads SNEKPKEGSGHLDREGT. The span at 755-771 shows a compositional bias: low complexity; the sequence is GATPDPDGDSGSPSSAT. Over residues 782 to 791 the composition is skewed to polar residues; the sequence is VTQQKGTSGT. Residues 847–861 show a composition bias toward basic and acidic residues; that stretch reads SDGHPEKPRPADRKL. Positions 949–965 are enriched in low complexity; that stretch reads PASPSESTSEEPGSQPE. Phosphoserine is present on Ser951. The segment covering 1043–1053 has biased composition (polar residues); it reads GPSQDSTSHAS. Residues 1112–1177 are a coiled coil; sequence HTELEAQSPE…EMKSKVQFLS (66 aa). An N-terminal Ras-GEF domain is found at 1239-1367; it reads KARILQAGTP…ALLEVGTERR (129 aa). Positions 1461 to 1712 constitute a Ras-GEF domain; it reads STNQLFTQLT…SGADVSILAA (252 aa).

In terms of assembly, interacts (via KIND2) with MAP2; the interaction enhances MAP2 phosphorylation and localizes KNDC1 to dendrites. As to expression, highly expressed in the brain and at low levels in the ovary. In the brain it is most prominently expressed in the cerebellum where it is restricted to the granular Purkinje cell layer.

It is found in the cell projection. The protein localises to the dendrite. The protein resides in the perikaryon. RAS-Guanine nucleotide exchange factor (GEF) that controls the negative regulation of neuronal dendrite growth by mediating a signaling pathway linking RAS and MAP2. May be involved in cellular senescence. This is Kinase non-catalytic C-lobe domain-containing protein 1 from Mus musculus (Mouse).